Consider the following 123-residue polypeptide: WAP four-disulfide core domain protein 2 (123 aa).

Positions 1–26 (MPACRLGLLVASLLLGLLLGLPPVTG) are cleaved as a signal peptide. 2 consecutive WAP domains span residues 28 to 69 (GAEK…VTIC) and 72 to 122 (PNEK…VTPV). 8 disulfides stabilise this stretch: Cys-35/Cys-61, Cys-44/Cys-65, Cys-48/Cys-60, Cys-54/Cys-69, Cys-79/Cys-109, Cys-92/Cys-113, Cys-96/Cys-108, and Cys-102/Cys-118.

As to quaternary structure, homotrimer; disulfide-linked. Detected in the distal parts of the epididymis.

Its subcellular location is the secreted. Its function is as follows. Broad range protease inhibitor. The chain is WAP four-disulfide core domain protein 2 (WFDC2) from Sus scrofa (Pig).